Reading from the N-terminus, the 231-residue chain is MQDPKVVIALDFDVKKDALDFVDRIDPSQCRLKVGKEMFTYFGPEFVRTLVAKEFDVFLDLKFHDIPNTVAKACIAAADLGVWMVNVHASGGEDMMIRAREGLAQFGQDKPHLIAVTVLTSMDKRQLSQIGIQSSPMEHVLTLASLTKQAGLDGVVCSAQEAAMLKETLGKEFMLVTPGIRPQGSDVGDQKRIMTPQEAMQVGVDYMVIGRPITQAKDPVAALDAINVSIA.

Substrate-binding positions include Asp11, Lys33, 60–69 (DLKFHDIPNT), Thr120, Arg181, Gln190, Gly210, and Arg211. Residue Lys62 is the Proton donor of the active site.

This sequence belongs to the OMP decarboxylase family. Type 1 subfamily. Homodimer.

The catalysed reaction is orotidine 5'-phosphate + H(+) = UMP + CO2. It functions in the pathway pyrimidine metabolism; UMP biosynthesis via de novo pathway; UMP from orotate: step 2/2. Catalyzes the decarboxylation of orotidine 5'-monophosphate (OMP) to uridine 5'-monophosphate (UMP). The protein is Orotidine 5'-phosphate decarboxylase of Pseudoalteromonas atlantica (strain T6c / ATCC BAA-1087).